The primary structure comprises 779 residues: MGERSGKRELPLLPLRGLLVYPTMVLHLDVGREKSIRALEQAMVDDNKILLATQEEVHIEEPDAEQIYSIGTVARVKQMLKLPNGTIRVLVEGLQRAKIEEYLQKEDYFVVSITYLKEEKAEENEVEALMRSLLTHFEQYIKLSKKVSPETLTSVQDIEEPGRLADVIASHLPLKMKDKQEILETVNIQERLEILLTILNNEREVLELERKIGNRVKKQMERTQKEYYLREQMKAIQKELGDKDGRQGEVDELRAQLEKSDAPERIKAKIEKELERLEKMPSTSAEGSVIRTYIDTLFALPWTKTTEDNLDIKHAEEVLDEDHYGLEKPKERVLEYLAVQKLVNSMRGPILCLVGPPGVGKTSLARSVARALGREFVRISLGGVRDEAEIRGHRRTYVGALPGRIIQGMKQAGTINPVFLLDEIDKLASDFRGDPASALLEVLDPNQNDKFSDHYIEETYDLTNVMFITTANSLDTIPRPLLDRMEVISISGYTELEKLNILRGYLLPKQMEDHGLGKDKLQMNEDAMLKLVRLYTREAGVRNLNREAANVCRKAAKIIVGGEKKRVVVTAKTLEALLGKPRYRYGLAEKKDQVGSVTGLAWTQAGGDTLNVEVSILAGKGKLTLTGQLGDVMKESAQAAFSYIRSRASEWGIDPEFHEKNDIHIHVPEGAIPKDGPSAGITMATALVSALTGIPVKKEVGMTGEITLRGRVLPIGGLKEKCMSAHRAGLTTIILPKDNEKDIEDIPESVREALTFYPVEHLDEVLRHALTKQPVGDKK.

The region spanning 10–203 (LPLLPLRGLL…ILLTILNNER (194 aa)) is the Lon N-terminal domain. Residue 355 to 362 (GPPGVGKT) coordinates ATP. The 182-residue stretch at 591–772 (KDQVGSVTGL…DEVLRHALTK (182 aa)) folds into the Lon proteolytic domain. Residues S678 and K721 contribute to the active site.

The protein belongs to the peptidase S16 family. Homohexamer. Organized in a ring with a central cavity.

Its subcellular location is the cytoplasm. The enzyme catalyses Hydrolysis of proteins in presence of ATP.. In terms of biological role, ATP-dependent serine protease that mediates the selective degradation of mutant and abnormal proteins as well as certain short-lived regulatory proteins. Required for cellular homeostasis and for survival from DNA damage and developmental changes induced by stress. Degrades polypeptides processively to yield small peptide fragments that are 5 to 10 amino acids long. Binds to DNA in a double-stranded, site-specific manner. In Brevibacillus choshinensis, this protein is Lon protease.